Reading from the N-terminus, the 284-residue chain is Probable endonuclease 4 (284 aa).

Zn(2+) is bound by residues His69, His113, Glu148, Asp182, His185, His217, Asp230, His232, and Glu262.

The protein belongs to the AP endonuclease 2 family. The cofactor is Zn(2+).

The catalysed reaction is Endonucleolytic cleavage to 5'-phosphooligonucleotide end-products.. Endonuclease IV plays a role in DNA repair. It cleaves phosphodiester bonds at apurinic or apyrimidinic (AP) sites, generating a 3'-hydroxyl group and a 5'-terminal sugar phosphate. The sequence is that of Probable endonuclease 4 from Bifidobacterium longum subsp. infantis (strain ATCC 15697 / DSM 20088 / JCM 1222 / NCTC 11817 / S12).